The primary structure comprises 158 residues: Transcription elongation factor GreA (158 aa).

It belongs to the GreA/GreB family.

In terms of biological role, necessary for efficient RNA polymerase transcription elongation past template-encoded arresting sites. The arresting sites in DNA have the property of trapping a certain fraction of elongating RNA polymerases that pass through, resulting in locked ternary complexes. Cleavage of the nascent transcript by cleavage factors such as GreA or GreB allows the resumption of elongation from the new 3'terminus. GreA releases sequences of 2 to 3 nucleotides. The polypeptide is Transcription elongation factor GreA (Polaromonas naphthalenivorans (strain CJ2)).